The chain runs to 394 residues: Ceramide glucosyltransferase (394 aa).

Residues 1–10 (MAVLDLALQG) lie on the Lumenal side of the membrane. A helical transmembrane segment spans residues 11–32 (LAIFGCVLFFVLWFMHFLSIVY). Residues 33–195 (TRLHLNKKVS…QVYFGTSHPR (163 aa)) are Cytoplasmic-facing. D92 is a short sequence motif (D1). Residue D144 is a short sequence motif, D2. The helical transmembrane segment at 196–215 (SYISANVTGFKCVTGMSCLM) threads the bilayer. Topologically, residues 216–287 (RKEVLDQAGG…KLRINMLPAT (72 aa)) are lumenal. Position 236 (D236) is a short sequence motif, D3. The active-site Proton acceptor is D236. The short motif at 272–276 (RMIRW) is the (Q/R)XXRW element. Residues 288-304 (IICEPISECFVASLIIG) form a helical membrane-spanning segment. Residues 305 to 309 (WAAHH) lie on the Cytoplasmic side of the membrane. The chain crosses the membrane as a helical span at residues 310-328 (IFRWDIMVFFMCHCLAWFI). The Lumenal portion of the chain corresponds to 329 to 348 (FDYIQLRGVQGGPLNFSKLD). The helical transmembrane segment at 349-369 (YAVAWFIRESMTIYIFLSALW) threads the bilayer. Residues 370-394 (DPTISWRTGRYRLRCGGTAEEILDV) lie on the Cytoplasmic side of the membrane.

It belongs to the glycosyltransferase 2 family.

It is found in the golgi apparatus membrane. It carries out the reaction an N-acylsphing-4-enine + UDP-alpha-D-glucose = a beta-D-glucosyl-(1&lt;-&gt;1')-N-acylsphing-4-enine + UDP + H(+). The catalysed reaction is UDP-alpha-D-xylose + an N-acylsphing-4-enine = a beta-D-xylosyl-(1&lt;-&gt;1')-N-acylsphing-4-enine + UDP + H(+). It catalyses the reaction N-(9Z-octadecenoyl)-sphing-4-enine + UDP-alpha-D-xylose = beta-D-xylosyl-(1&lt;-&gt;1')-N-(9Z-octadecenoyl)-sphing-4-enine + UDP + H(+). It participates in lipid metabolism; sphingolipid metabolism. Its function is as follows. Participates in the initial step of the glucosylceramide-based glycosphingolipid/GSL synthetic pathway at the cytosolic surface of the Golgi. Catalyzes the transfer of glucose from UDP-glucose to ceramide to produce glucosylceramide/GlcCer (such as beta-D-glucosyl-(1&lt;-&gt;1')-N-acylsphing-4-enine). Glucosylceramide is the core component of glycosphingolipids/GSLs, amphipathic molecules consisting of a ceramide lipid moiety embedded in the outer leaflet of the membrane, linked to one of hundreds of different externally oriented oligosaccharide structures. Glycosphingolipids are essential components of membrane microdomains that mediate membrane trafficking and signal transduction. They are implicated in many fundamental cellular processes, including growth, differentiation, migration, morphogenesis, cell-to-cell and cell-to-matrix interactions. Catalyzes the synthesis of xylosylceramide/XylCer (such as beta-D-xylosyl-(1&lt;-&gt;1')-N-acylsphing-4-enine) using UDP-Xyl as xylose donor. This is Ceramide glucosyltransferase (ugcg) from Xenopus tropicalis (Western clawed frog).